A 422-amino-acid polypeptide reads, in one-letter code: MRNDKIFEESKLYMPGGVNSPVRAFKDVPLNPPVIKKGRGAYIYDEDGNEYIDFVCSWGPMILGHCDEDVVNAIKYTSENAISFGATTKIELELSKYICTTMDNIEMIRMVNSGTEATMSAVKLARGYTRRNKIIKFSGCYHGHFDDFLVEAGSGVMTEGIPGSAGVPKDSIKNTIIAEYNNLEDVKNIFNKYGSDTAAIIVEPVAGNMGVIPGRIDFLKGLRKLCDEYGSLLIFDEVMSGFRVAYKGAQSLYGIKPDITTMAKIMGGGLPCGAYGGRKDIMENLSPLGPVYQAGTMSGNPIVMAAGLATLKKLNENPDYYVKLEKLGKKLEKGIKQISKDKNIPMVINRCGAMFSIFFTSDSEVKNYKDARKCDTTIFAKFFQHMLERGIYIAPSQFEAIFLNVKHTEEHIDKFLQAVNTF.

An N6-(pyridoxal phosphate)lysine modification is found at K264.

The protein belongs to the class-III pyridoxal-phosphate-dependent aminotransferase family. HemL subfamily. In terms of assembly, homodimer. It depends on pyridoxal 5'-phosphate as a cofactor.

The protein localises to the cytoplasm. The enzyme catalyses (S)-4-amino-5-oxopentanoate = 5-aminolevulinate. It participates in porphyrin-containing compound metabolism; protoporphyrin-IX biosynthesis; 5-aminolevulinate from L-glutamyl-tRNA(Glu): step 2/2. This chain is Glutamate-1-semialdehyde 2,1-aminomutase, found in Clostridium kluyveri (strain ATCC 8527 / DSM 555 / NBRC 12016 / NCIMB 10680 / K1).